We begin with the raw amino-acid sequence, 186 residues long: MLLLVGLGNPGKQYEFTRHNVGFVVADTVARDFNFPEFSSKYDALVSVGNVGLHRAMIVKPATFMNRSGAAVLKAASMHKIPAEQITVFHDDADLQHGVVKVKQGGGNAGHNGLRSIDAAIGCQYWRVRLGVGRPDVGSLSGHVLSDFHDFDSVQQLAHKISANLTELLDGNVNGFISKIRCDHAQ.

Tyrosine 14 contributes to the tRNA binding site. Histidine 19 acts as the Proton acceptor in catalysis. The tRNA site is built by phenylalanine 64, asparagine 66, and asparagine 112.

Belongs to the PTH family. As to quaternary structure, monomer.

Its subcellular location is the cytoplasm. The enzyme catalyses an N-acyl-L-alpha-aminoacyl-tRNA + H2O = an N-acyl-L-amino acid + a tRNA + H(+). Its function is as follows. Hydrolyzes ribosome-free peptidyl-tRNAs (with 1 or more amino acids incorporated), which drop off the ribosome during protein synthesis, or as a result of ribosome stalling. Catalyzes the release of premature peptidyl moieties from peptidyl-tRNA molecules trapped in stalled 50S ribosomal subunits, and thus maintains levels of free tRNAs and 50S ribosomes. This chain is Peptidyl-tRNA hydrolase, found in Anaplasma marginale (strain St. Maries).